The primary structure comprises 359 residues: S-adenosylmethionine:tRNA ribosyltransferase-isomerase (359 aa).

This sequence belongs to the QueA family. Monomer.

Its subcellular location is the cytoplasm. It carries out the reaction 7-aminomethyl-7-carbaguanosine(34) in tRNA + S-adenosyl-L-methionine = epoxyqueuosine(34) in tRNA + adenine + L-methionine + 2 H(+). Its pathway is tRNA modification; tRNA-queuosine biosynthesis. Transfers and isomerizes the ribose moiety from AdoMet to the 7-aminomethyl group of 7-deazaguanine (preQ1-tRNA) to give epoxyqueuosine (oQ-tRNA). In Colwellia psychrerythraea (strain 34H / ATCC BAA-681) (Vibrio psychroerythus), this protein is S-adenosylmethionine:tRNA ribosyltransferase-isomerase.